A 463-amino-acid polypeptide reads, in one-letter code: V-type proton ATPase subunit S1 (463 aa).

The first 32 residues, methionine 1–alanine 32, serve as a signal peptide directing secretion. A propeptide spanning residues valine 33 to arginine 225 is cleaved from the precursor. Topologically, residues valine 33–alanine 412 are lumenal. Asparagine 164, asparagine 255, asparagine 267, asparagine 290, asparagine 297, asparagine 344, asparagine 351, and asparagine 399 each carry an N-linked (GlcNAc...) asparagine glycan. Cysteine 365 and cysteine 411 are oxidised to a cystine. Residues glycine 413–phenylalanine 433 traverse the membrane as a helical segment. At threonine 434–valine 463 the chain is on the cytoplasmic side.

It belongs to the vacuolar ATPase subunit S1 family. As to quaternary structure, accessory component of the multisubunit proton-transporting vacuolar (V)-ATPase protein pump. Interacts (via N-terminus) with ATP6AP2 (via N-terminus). Interacts with RNASEK. Interacts with TMEM106B (via C-terminus). Post-translationally, N-glycosylated. In terms of tissue distribution, expressed in brain cortex (at protein level). Highly expressed in islets of Langerhans. Expressed in pancreatic acini, pituitary gland, adrenal gland, lung, brain and bone marrow.

The protein localises to the endoplasmic reticulum membrane. It localises to the endoplasmic reticulum-Golgi intermediate compartment membrane. The protein resides in the cytoplasmic vesicle. Its subcellular location is the secretory vesicle. It is found in the synaptic vesicle membrane. The protein localises to the clathrin-coated vesicle membrane. Functionally, accessory subunit of the proton-transporting vacuolar (V)-ATPase protein pump, which is required for luminal acidification of secretory vesicles. Guides the V-type ATPase into specialized subcellular compartments, such as neuroendocrine regulated secretory vesicles or the ruffled border of the osteoclast, thereby regulating its activity. Involved in membrane trafficking and Ca(2+)-dependent membrane fusion. May play a role in the assembly of the V-type ATPase complex. In aerobic conditions, involved in intracellular iron homeostasis, thus triggering the activity of Fe(2+) prolyl hydroxylase (PHD) enzymes, and leading to HIF1A hydroxylation and subsequent proteasomal degradation. In islets of Langerhans cells, may regulate the acidification of dense-core secretory granules. In Mus musculus (Mouse), this protein is V-type proton ATPase subunit S1 (Atp6ap1).